Reading from the N-terminus, the 266-residue chain is Adaptin ear-binding coat-associated protein 2 (266 aa).

Disordered stretches follow at residues 164–191 (SMKK…LPPP) and 244–266 (GDFT…WVQF). Ser-181 bears the Phosphoserine mark. The WXXF motif 1 motif lies at 243-246 (WGDF). Residues 247 to 258 (TKSTGSTSSQTQ) show a composition bias toward low complexity. The short motif at 263–266 (WVQF) is the WXXF motif 2 element.

The protein belongs to the NECAP family. As to quaternary structure, interacts with AP1G1 and AP2A1 components of the adapter protein complexes AP-1 and AP-2. Interacts with the GAE domain proteins GGA1, GGA2 and GGA3.

Its subcellular location is the cytoplasmic vesicle. The protein localises to the clathrin-coated vesicle membrane. It is found in the cell membrane. In terms of biological role, involved in endocytosis. In Bos taurus (Bovine), this protein is Adaptin ear-binding coat-associated protein 2 (NECAP2).